Consider the following 356-residue polypeptide: sn-glycerol-3-phosphate import ATP-binding protein UgpC (356 aa).

An ABC transporter domain is found at 4–235; the sequence is LKLQAVTKSW…PASLFVASFI (232 aa). Residue 37 to 44 coordinates ATP; sequence GPSGCGKS.

The protein belongs to the ABC transporter superfamily. sn-glycerol-3-phosphate importer (TC 3.A.1.1.3) family. As to quaternary structure, the complex is composed of two ATP-binding proteins (UgpC), two transmembrane proteins (UgpA and UgpE) and a solute-binding protein (UgpB).

The protein resides in the cell inner membrane. The enzyme catalyses sn-glycerol 3-phosphate(out) + ATP + H2O = sn-glycerol 3-phosphate(in) + ADP + phosphate + H(+). Its function is as follows. Part of the ABC transporter complex UgpBAEC involved in sn-glycerol-3-phosphate (G3P) import. Responsible for energy coupling to the transport system. The sequence is that of sn-glycerol-3-phosphate import ATP-binding protein UgpC from Escherichia coli O157:H7.